The chain runs to 162 residues: Probable chemoreceptor glutamine deamidase CheD (162 aa).

It belongs to the CheD family.

The catalysed reaction is L-glutaminyl-[protein] + H2O = L-glutamyl-[protein] + NH4(+). In terms of biological role, probably deamidates glutamine residues to glutamate on methyl-accepting chemotaxis receptors (MCPs), playing an important role in chemotaxis. The polypeptide is Probable chemoreceptor glutamine deamidase CheD (Clostridium kluyveri (strain ATCC 8527 / DSM 555 / NBRC 12016 / NCIMB 10680 / K1)).